A 1396-amino-acid polypeptide reads, in one-letter code: uncharacterized protein (1396 aa).

ATP is bound at residue 88 to 95 (AYKKWGRS). 2 disordered regions span residues 146-165 (EKIH…LSPT) and 198-388 (KPCS…VKDL). The segment covering 198–221 (KPCSYSSSSSSSTVPPASTDTSSP) has biased composition (low complexity). The segment covering 242-268 (MHEKAQSRSRHEKESKLSSSTIEEKPA) has biased composition (basic and acidic residues). Positions 286–300 (SWSSGSSEAGSSSSG) are enriched in low complexity. Residues 312 to 327 (VKVRHKAREIRNRKGR) are compositionally biased toward basic residues. Serine 817 and serine 1083 each carry phosphoserine. Residues 1113–1137 (PISASELSPGGGSESEFESEKDEAS) are disordered. 2 positions are modified to phosphoserine: serine 1197 and serine 1339. The disordered stretch occupies residues 1347–1396 (TGERGSETKPNGLHRKMCSSASSDTGDTGSEAGGEWVGPSREELFSRTHL). Positions 1365 to 1376 (SSASSDTGDTGS) are enriched in low complexity. A compositionally biased stretch (basic and acidic residues) spans 1386-1396 (SREELFSRTHL).

This is an uncharacterized protein from Mus musculus (Mouse).